We begin with the raw amino-acid sequence, 1433 residues long: DNA-directed RNA polymerase subunit beta' (1433 aa).

Zn(2+)-binding residues include cysteine 66, cysteine 68, cysteine 81, and cysteine 84. Positions 473, 475, and 477 each coordinate Mg(2+). Zn(2+) is bound by residues cysteine 815, cysteine 889, cysteine 896, and cysteine 899.

Belongs to the RNA polymerase beta' chain family. In terms of assembly, the RNAP catalytic core consists of 2 alpha, 1 beta, 1 beta' and 1 omega subunit. When a sigma factor is associated with the core the holoenzyme is formed, which can initiate transcription. Mg(2+) is required as a cofactor. Requires Zn(2+) as cofactor.

It carries out the reaction RNA(n) + a ribonucleoside 5'-triphosphate = RNA(n+1) + diphosphate. Functionally, DNA-dependent RNA polymerase catalyzes the transcription of DNA into RNA using the four ribonucleoside triphosphates as substrates. The polypeptide is DNA-directed RNA polymerase subunit beta' (Porphyromonas gingivalis (strain ATCC 33277 / DSM 20709 / CIP 103683 / JCM 12257 / NCTC 11834 / 2561)).